The chain runs to 312 residues: Small kinetochore-associated protein (312 aa).

The segment at 1 to 171 is disordered; that stretch reads MAAPEAEAQE…PFNKQKPEEE (171 aa). Positions 131-143 are enriched in basic and acidic residues; that stretch reads DVTKVTKSRRENG. The tract at residues 156–312 is interaction with SPAG5; the sequence is LRNSYKPFNK…LEEMEQLLEM (157 aa). Coiled-coil stretches lie at residues 166 to 210 and 246 to 287; these read QKPE…LEKF and LLET…QFLE.

In terms of assembly, part of an astrin (SPAG5)-kinastrin (SKAP) complex containing KNSTRN, SPAG5, PLK1, DYNLL1 and SGO2A. Interacts with SPAG5. Directly binds to microtubules, although at relatively low affinity. Interacts with CENPE; this interaction greatly favors microtubule-binding. Interacts with DSN1/MIS13; leading to localization to kinetochores. Interacts with MAPRE1/EB1; leading to localization to the microtubule plus ends. Interacts with PRPF19. Interacts with DYNLL1. Interacts with MAP4.

Its subcellular location is the nucleus. The protein resides in the chromosome. It is found in the centromere. The protein localises to the kinetochore. It localises to the cytoplasm. Its subcellular location is the cytoskeleton. The protein resides in the spindle pole. It is found in the microtubule organizing center. Essential component of the mitotic spindle required for faithful chromosome segregation and progression into anaphase. Promotes the metaphase-to-anaphase transition and is required for chromosome alignment, normal timing of sister chromatid segregation, and maintenance of spindle pole architecture. The astrin (SPAG5)-kinastrin (SKAP) complex promotes stable microtubule-kinetochore attachments. Required for kinetochore oscillations and dynamics of microtubule plus-ends during live cell mitosis, possibly by forming a link between spindle microtubule plus-ends and mitotic chromosomes to achieve faithful cell division. The sequence is that of Small kinetochore-associated protein (Knstrn) from Mus musculus (Mouse).